A 218-amino-acid chain; its full sequence is Small ribosomal subunit protein uS7m (218 aa).

Residues 1–19 constitute a mitochondrion transit peptide; it reads MSLLGRIAEKTSRLSCLRL.

It belongs to the universal ribosomal protein uS7 family. In terms of assembly, component of the mitochondrial ribosome small subunit (28S) which comprises a 12S rRNA and about 30 distinct proteins.

It localises to the mitochondrion. The chain is Small ribosomal subunit protein uS7m (mRpS7) from Drosophila melanogaster (Fruit fly).